Reading from the N-terminus, the 174-residue chain is Large ribosomal subunit protein uL10 (174 aa).

The protein belongs to the universal ribosomal protein uL10 family. Part of the ribosomal stalk of the 50S ribosomal subunit. The N-terminus interacts with L11 and the large rRNA to form the base of the stalk. The C-terminus forms an elongated spine to which L12 dimers bind in a sequential fashion forming a multimeric L10(L12)X complex.

In terms of biological role, forms part of the ribosomal stalk, playing a central role in the interaction of the ribosome with GTP-bound translation factors. The sequence is that of Large ribosomal subunit protein uL10 from Trichlorobacter lovleyi (strain ATCC BAA-1151 / DSM 17278 / SZ) (Geobacter lovleyi).